The primary structure comprises 575 residues: Polyprotein P2A (575 aa).

Transmembrane regions (helical) follow at residues 10 to 30 (FLITLANVICAAILFDIHTGG), 36 to 56 (LIPIVAWMTPFVTLLWLSASF), and 74 to 96 (VARVYYTAQSAPYFDPALGVMMQ). The Peptidase S39 domain maps to 135 to 335 (VLGSFYSSVK…TLPPELSVIE (201 aa)). Catalysis depends on for protease activity residues His181, Asp216, and Ser284. The segment at 513-575 (KTSLSATPPP…QPTKTSLRGI (63 aa)) is disordered. Over residues 541 to 553 (KSARRRNRRKSTR) the composition is skewed to basic residues. Positions 558-575 (ESPSPASPQPTKTSLRGI) are enriched in polar residues.

Post-translationally, the polyprotein is proteolytically cleaved into several chains by the viral protease.

The protein resides in the host membrane. Functionally, responsible for cleavages of polyprotein P2A and replicase polyprotein P2AB. Covalently attached to the 5' extremity of the genomic and subgenomic RNAs. It may serve as a primer for the replicase. The chain is Polyprotein P2A from Southern bean mosaic virus (isolate Bean/United States/Arkansas) (SBMV).